The primary structure comprises 427 residues: Trigger factor (427 aa).

Residues G163–P248 enclose the PPIase FKBP-type domain.

It belongs to the FKBP-type PPIase family. Tig subfamily.

Its subcellular location is the cytoplasm. It carries out the reaction [protein]-peptidylproline (omega=180) = [protein]-peptidylproline (omega=0). Involved in protein export. Acts as a chaperone by maintaining the newly synthesized protein in an open conformation. Functions as a peptidyl-prolyl cis-trans isomerase. This is Trigger factor from Streptococcus pneumoniae (strain Taiwan19F-14).